Reading from the N-terminus, the 1379-residue chain is Protein three rows (1379 aa).

The tract at residues 1031–1037 is separase cleavage-site; sequence VEPIRKQ. Disordered regions lie at residues 1206 to 1231, 1248 to 1309, and 1328 to 1379; these read PEDKKRTATGSVSAVKNTASKVKQSA, PSAT…ATSK, and ITTS…RHRH. Polar residues predominate over residues 1213 to 1228; it reads ATGSVSAVKNTASKVK. Residues 1248–1267 show a composition bias toward low complexity; that stretch reads PSATSCSSSGGSGTENTPPS.

Interacts with pim and Sse. Cleavage of thr contributes to inactivation of Sse. Proteolytically cleaved after the metaphase-to-anaphase transition, C-terminal cleavage product is degraded. Cleavage can only proceed within complexes that contain active Sse. As to expression, during embryogenesis, expressed in Malpighian tubule buds, and epithelia of foregut and hindgut.

It localises to the cytoplasm. In terms of biological role, required specifically for chromosome disjunction during all mitoses; maternally provided protein is sufficient until mitosis 14 then zygotic protein is required. Involved in formation and/or maintenance of epithelial structures: bud extension during Malpighian tubule development, and foregut and hindgut morphogenesis. The chain is Protein three rows (thr) from Drosophila melanogaster (Fruit fly).